The following is a 75-amino-acid chain: Rugosin-LK2 (75 aa).

The signal sequence occupies residues 1 to 24 (MFTMKKSLLFLFFLGTISLSFCEG). Positions 25–40 (ERSADEDDEGEMTEEE) are excised as a propeptide.

In terms of tissue distribution, expressed by the skin glands.

It localises to the secreted. Functionally, has antimicrobial activity against Gram-positive bacteria S.aureus ATCC 2592 (MIC=10.0 uM), S.aureus ATCC 43300 (MIC=10.0 uM) and B.subtilis (MIC=30.0 uM), against Gram-negative bacteria E.coli ML-35P (MIC=10.0 uM), P.aeruginosa PA01 (MIC=2.5 uM) and P.aeruginosa ATCC 27853 (MIC=2.5 uM) and against fungus C.albicans ATCC 2002 (MIC=10.0 uM). This is Rugosin-LK2 from Limnonectes kuhlii (Kuhl's Creek frog).